We begin with the raw amino-acid sequence, 276 residues long: Insulin-like growth factor-binding protein 2-A (276 aa).

A signal peptide spans 1-22 (MLSYVSCGLLLALVTFHGTARS). An IGFBP N-terminal domain is found at 24–105 (MVFRCPSCTA…VQGLGRCGRK (82 aa)). Intrachain disulfides connect C28-C55, C31-C57, C39-C58, C46-C61, C69-C82, C76-C102, C180-C214, C225-C236, and C238-C259. The Thyroglobulin type-1 domain occupies 177–259 (QSQCQQELDQ…SPLIRGDPNC (83 aa)). The Cell attachment site motif lies at 254 to 256 (RGD).

In terms of assembly, interacts equally well with igf1 and igf2. As to expression, in embryos at 24 hpf, initially expressed in the lens and cranial region, and at 48 and 72 hpf in the brain boundary vasculature. Expression in these regions persists throughout the hatching period and by 96 hpf expression is most abundant in the liver. In both male and female adults, highest expression is in the liver with modest expression in the brain. In male but not females adults, expressed at a low level in muscle and gonad. Also expressed in the adult intestine.

It is found in the secreted. Functionally, IGF-binding proteins prolong the half-life of the IGFs and have been shown to either inhibit or stimulate the growth promoting effects of the IGFs on cell culture. They alter the interaction of IGFs with their cell surface receptors. This chain is Insulin-like growth factor-binding protein 2-A (igfbp2a), found in Danio rerio (Zebrafish).